Consider the following 122-residue polypeptide: Large ribosomal subunit protein uL14 (122 aa).

It belongs to the universal ribosomal protein uL14 family. As to quaternary structure, part of the 50S ribosomal subunit. Forms a cluster with proteins L3 and L19. In the 70S ribosome, L14 and L19 interact and together make contacts with the 16S rRNA in bridges B5 and B8.

Its function is as follows. Binds to 23S rRNA. Forms part of two intersubunit bridges in the 70S ribosome. The chain is Large ribosomal subunit protein uL14 from Streptomyces avermitilis (strain ATCC 31267 / DSM 46492 / JCM 5070 / NBRC 14893 / NCIMB 12804 / NRRL 8165 / MA-4680).